The chain runs to 297 residues: uncharacterized protein (297 aa).

Disordered stretches follow at residues 1–20 (MDTLPPATSEESFEIPNADV), 39–100 (IEKD…ENLG), and 174–297 (VQKA…NEDQ). Positions 101–179 (NDLFVSGIAS…RVLNVQKAKR (79 aa)) constitute an RRM domain. Ser184 is modified (phosphoserine). Composition is skewed to basic and acidic residues over residues 209-223 (GGYRRNNYRDRDSNR) and 233-253 (PQREHSPGNYRKERYNVDSRP). The segment covering 254-263 (RRERHFHGRS) has biased composition (basic residues). The segment covering 287 to 297 (SHSSVPPNEDQ) has biased composition (polar residues).

The protein localises to the nucleus. This is an uncharacterized protein from Schizosaccharomyces pombe (strain 972 / ATCC 24843) (Fission yeast).